A 407-amino-acid polypeptide reads, in one-letter code: [Pyruvate dehydrogenase (acetyl-transferring)] kinase isozyme 2, mitochondrial (407 aa).

The region spanning 135–364 (LEYKDTYGDD…DAVIYLKALS (230 aa)) is the Histidine kinase domain. Residues Tyr215 and Tyr216 each carry the phosphotyrosine modification. ATP is bound by residues 251 to 258 (ELFKNAMR), Asp290, 309 to 310 (ST), and 325 to 330 (GFGYGL). Lys376 carries the N6-succinyllysine modification.

Belongs to the PDK/BCKDK protein kinase family. Homodimer, and heterodimer with PDK1. Interacts with the pyruvate dehydrogenase complex subunit DLAT, and is part of the multimeric pyruvate dehydrogenase complex that contains multiple copies of pyruvate dehydrogenase (E1), dihydrolipoamide acetyltransferase (DLAT, E2) and lipoamide dehydrogenase (DLD, E3). In terms of tissue distribution, expressed in many tissues, with the highest level in heart and skeletal muscle, intermediate levels in brain, kidney, pancreas and liver, and low levels in placenta and lung.

The protein localises to the mitochondrion matrix. It catalyses the reaction L-seryl-[pyruvate dehydrogenase E1 alpha subunit] + ATP = O-phospho-L-seryl-[pyruvate dehydrogenase E1 alpha subunit] + ADP + H(+). With respect to regulation, activity is enhanced by binding to the pyruvate dehydrogenase subunit DLAT. Inhibited by ADP and pyruvate; these compounds interfere with DLAT binding and thereby inhibit kinase activity. Inhibited by dichloroacetate. Inhibited by AZD7545; this compound interferes with DLAT binding and thereby inhibits kinase activity. In terms of biological role, kinase that plays a key role in the regulation of glucose and fatty acid metabolism and homeostasis via phosphorylation of the pyruvate dehydrogenase subunits PDHA1 and PDHA2. This inhibits pyruvate dehydrogenase activity, and thereby regulates metabolite flux through the tricarboxylic acid cycle, down-regulates aerobic respiration and inhibits the formation of acetyl-coenzyme A from pyruvate. Inhibition of pyruvate dehydrogenase decreases glucose utilization and increases fat metabolism. Mediates cellular responses to insulin. Plays an important role in maintaining normal blood glucose levels and in metabolic adaptation to nutrient availability. Via its regulation of pyruvate dehydrogenase activity, plays an important role in maintaining normal blood pH and in preventing the accumulation of ketone bodies under starvation. Plays a role in the regulation of cell proliferation and in resistance to apoptosis under oxidative stress. Plays a role in p53/TP53-mediated apoptosis. This is [Pyruvate dehydrogenase (acetyl-transferring)] kinase isozyme 2, mitochondrial (PDK2) from Homo sapiens (Human).